The sequence spans 275 residues: DNA-directed RNA polymerase subunit Rpo3 (275 aa).

This sequence belongs to the archaeal Rpo3/eukaryotic RPB3 RNA polymerase subunit family. As to quaternary structure, part of the RNA polymerase complex.

The protein resides in the cytoplasm. It carries out the reaction RNA(n) + a ribonucleoside 5'-triphosphate = RNA(n+1) + diphosphate. Functionally, DNA-dependent RNA polymerase (RNAP) catalyzes the transcription of DNA into RNA using the four ribonucleoside triphosphates as substrates. The polypeptide is DNA-directed RNA polymerase subunit Rpo3 (Methanopyrus kandleri (strain AV19 / DSM 6324 / JCM 9639 / NBRC 100938)).